The sequence spans 393 residues: MHQPAIMQRALAVVALLAAAAAIAAAQGESPELLPFAVGAAPEGCDVGEGEWVFDEAARPWYAEEECPYIQPDLTCQAHGRPDAAYQRWRWQPRDCSLPSFNATGMLEMLRGKRMLFVGDSLLRGQYTSLLCLLHRGAPGGGGGSRSFETVDSLSIFRAKDYDATIEFYWAPMLAESNSDGAAVPDDRLIRGAPMNKHSSFWKGADVLVFNSYLWWMTGDKIQILRGADEDMSKDIVEMEAAEAYRLVLHQVTRWLEGNVDPKSARVFFVTASPSHAGAGGECYDQTTPVGAADAASYCGSTSRRMVQVAGEVLGASRVPVGVVNVTRMSELRRDAHTQVYREQRWAKPTAEQLAADPRSYADCTHWCLPGVPDAWNELLYWKLFFPARDEAI.

At 1–9 the chain is on the cytoplasmic side; that stretch reads MHQPAIMQR. A helical; Signal-anchor for type II membrane protein membrane pass occupies residues 10 to 26; it reads ALAVVALLAAAAAIAAA. Residues 27–393 lie on the Lumenal side of the membrane; sequence QGESPELLPF…LFFPARDEAI (367 aa). 4 cysteine pairs are disulfide-bonded: cysteine 45/cysteine 96, cysteine 67/cysteine 132, cysteine 76/cysteine 368, and cysteine 283/cysteine 364. Asparagine 102 carries N-linked (GlcNAc...) asparagine glycosylation. Positions 119–121 match the GDS motif motif; sequence GDS. Serine 121 (nucleophile) is an active-site residue. A glycan (N-linked (GlcNAc...) asparagine) is linked at asparagine 325. Catalysis depends on aspartate 363, which acts as the Proton donor. Positions 363-366 match the DXXH motif motif; that stretch reads DCTH. Histidine 366 serves as the catalytic Proton acceptor.

It belongs to the PC-esterase family. TBL subfamily. In terms of tissue distribution, expressed in roots, leaves and stems.

Its subcellular location is the golgi apparatus membrane. Its function is as follows. Probable xylan acetyltransferase required for 2-O- and 3-O-monoacetylation of xylosyl residues in xylan. Possesses extremely low activity in vitro. This Oryza sativa subsp. japonica (Rice) protein is Probable xylan O-acetyltransferase 11.